A 427-amino-acid chain; its full sequence is 3-phosphoshikimate 1-carboxyvinyltransferase (427 aa).

K22, S23, and R27 together coordinate 3-phosphoshikimate. K22 serves as a coordination point for phosphoenolpyruvate. G96 and R124 together coordinate phosphoenolpyruvate. 3-phosphoshikimate contacts are provided by S169, S170, Q171, S197, D313, N336, and K340. Q171 provides a ligand contact to phosphoenolpyruvate. D313 (proton acceptor) is an active-site residue. Positions 344, 386, and 411 each coordinate phosphoenolpyruvate.

The protein belongs to the EPSP synthase family. In terms of assembly, monomer.

It is found in the cytoplasm. It catalyses the reaction 3-phosphoshikimate + phosphoenolpyruvate = 5-O-(1-carboxyvinyl)-3-phosphoshikimate + phosphate. It participates in metabolic intermediate biosynthesis; chorismate biosynthesis; chorismate from D-erythrose 4-phosphate and phosphoenolpyruvate: step 6/7. Catalyzes the transfer of the enolpyruvyl moiety of phosphoenolpyruvate (PEP) to the 5-hydroxyl of shikimate-3-phosphate (S3P) to produce enolpyruvyl shikimate-3-phosphate and inorganic phosphate. The chain is 3-phosphoshikimate 1-carboxyvinyltransferase from Klebsiella pneumoniae (strain 342).